Consider the following 544-residue polypeptide: O-phosphoserine--tRNA(Cys) ligase (544 aa).

Substrate is bound by residues 194-196, 239-241, 281-282, and N335; these read HMT, SAS, and YY.

Belongs to the class-II aminoacyl-tRNA synthetase family. O-phosphoseryl-tRNA(Cys) synthetase subfamily. As to quaternary structure, homotetramer. Interacts with SepCysS.

It catalyses the reaction tRNA(Cys) + O-phospho-L-serine + ATP = O-phospho-L-seryl-tRNA(Cys) + AMP + diphosphate. Functionally, catalyzes the attachment of O-phosphoserine (Sep) to tRNA(Cys). In Methanopyrus kandleri (strain AV19 / DSM 6324 / JCM 9639 / NBRC 100938), this protein is O-phosphoserine--tRNA(Cys) ligase.